Consider the following 216-residue polypeptide: Cytochrome c-type protein Cgr1 (216 aa).

A helical transmembrane segment spans residues 18-38 (WPIVVGVVVVVLIAAGAGFWV). Heme is bound by residues Cys46, Cys50, His51, Cys95, Cys98, His99, Cys142, Cys147, His148, Cys176, Cys179, His180, Cys190, Cys193, and His194.

The protein belongs to the multiheme cytochrome c family. As to quaternary structure, may form a membrane-associated complex with Cgr2. Post-translationally, binds 5 heme groups per subunit.

It localises to the cell membrane. Functionally, probably transfers electrons from a membrane-associated electron donor (e.g. the membrane quinone pool) to the [4Fe-4S] cluster of the Cgr2 reductase via its covalently bound heme groups. The sequence is that of Cytochrome c-type protein Cgr1 from Eggerthella lenta (strain ATCC 25559 / DSM 2243 / CCUG 17323 / JCM 9979 / KCTC 3265 / NCTC 11813 / VPI 0255 / 1899 B) (Eubacterium lentum).